The primary structure comprises 473 residues: Putative BTB/POZ domain-containing protein R765 (473 aa).

The 71-residue stretch at threonine 2–aspartate 72 folds into the BTB domain.

This sequence belongs to the mimivirus BTB/WD family.

The chain is Putative BTB/POZ domain-containing protein R765 from Acanthamoeba polyphaga mimivirus (APMV).